The primary structure comprises 752 residues: MAP/microtubule affinity-regulating kinase 4 (752 aa).

Residues 1–36 (MSSRTALAPGNDRNSDTHGTLGSGRSSDKGPSWSSR) are disordered. The 252-residue stretch at 59–310 (YRLLRTIGKG…LEQIMKDKWI (252 aa)) folds into the Protein kinase domain. ATP-binding positions include 65–73 (IGKGNFAKV) and K88. D181 (proton acceptor) is an active-site residue. T214 carries the phosphothreonine; by LKB1 modification. Positions 324-368 (EPEEDFGDTKRIEVMVGMGYTREEIKEALTNQKYNEVTATYLLLG) constitute a UBA domain. Positions 385 to 615 (ARVRAPSDTT…SGRPRPTTNL (231 aa)) are disordered. Low complexity predominate over residues 391 to 406 (SDTTNGTSSSKGSSHN). 2 positions are modified to phosphoserine: S423 and S543. The segment covering 544 to 553 (PSSHSLAPPS) has biased composition (low complexity). Positions 703-752 (AGGPEPLSHFEVEVCQLPRPGLRGVLFRRVAGTALAFRTLVTRISNDLEL) constitute a KA1 domain.

The protein belongs to the protein kinase superfamily. CAMK Ser/Thr protein kinase family. SNF1 subfamily. As to quaternary structure, interacts with MAPT/TAU. Interacts with gamma-tubulin. Interacts with ODF2. Interacts with USP9X. Interacts with YWHAQ. Interacts with NLRP3; promoting NLRP3 recruitment to microtubule organizing center (MTOC). The cofactor is Mg(2+). In terms of processing, ubiquitinated with 'Lys-29'- and 'Lys-33'-linked polyubiquitins which appear to impede LKB1-mediated phosphorylation. Deubiquitinated by USP9X. Post-translationally, phosphorylated at Thr-214 by STK11/LKB1 in complex with STE20-related adapter-alpha (STRADA) pseudo kinase and CAB39. Phosphorylated throughout the cell cycle. In terms of tissue distribution, isoform 1 and isoform 2 show similar expression patterns in the central nervous system and are present in the same subsets of neurons including pyramidal and non-pyramidal neurons in the cerebral cortex and hippocampus, cerebellar Purkinje cells, and interneurons and motor neurons in the spinal cord but not in glial cells (at protein level). Isoform 2 is the major isoform in brain and cerebellum. Also expressed in spleen, liver, small intestine, colon, kidney, tongue, testis and lung. Isoform 1 and isoform 2 are expressed at similar levels in heart.

The protein localises to the cytoplasm. Its subcellular location is the cytoskeleton. It localises to the microtubule organizing center. It is found in the centrosome. The protein resides in the cilium axoneme. The protein localises to the cilium basal body. Its subcellular location is the cell projection. It localises to the dendrite. It catalyses the reaction L-seryl-[protein] + ATP = O-phospho-L-seryl-[protein] + ADP + H(+). The catalysed reaction is L-threonyl-[protein] + ATP = O-phospho-L-threonyl-[protein] + ADP + H(+). Its activity is regulated as follows. Activated by phosphorylation on Thr-214. In terms of biological role, serine/threonine-protein kinase. Phosphorylates the microtubule-associated protein MAPT/TAU. Also phosphorylates the microtubule-associated proteins MAP2 and MAP4. Involved in regulation of the microtubule network, causing reorganization of microtubules into bundles. Required for the initiation of axoneme extension during cilium assembly. Regulates the centrosomal location of ODF2 and phosphorylates ODF2 in vitro. Plays a role in cell cycle progression, specifically in the G1/S checkpoint. Reduces neuronal cell survival. Plays a role in energy homeostasis by regulating satiety and metabolic rate. Promotes adipogenesis by activating JNK1 and inhibiting the p38MAPK pathway, and triggers apoptosis by activating the JNK1 pathway. Phosphorylates mTORC1 complex member RPTOR and acts as a negative regulator of the mTORC1 complex, probably due to disruption of the interaction between phosphorylated RPTOR and the RRAGA/RRAGC heterodimer which is required for mTORC1 activation. Involved in NLRP3 positioning along microtubules by mediating NLRP3 recruitment to microtubule organizing center (MTOC) upon inflammasome activation. This Mus musculus (Mouse) protein is MAP/microtubule affinity-regulating kinase 4.